The primary structure comprises 395 residues: Gastric triacylglycerol lipase (395 aa).

The signal sequence occupies residues 1-18 (MWLLLVTSVLSAFGGAHG). A glycan (N-linked (GlcNAc...) asparagine) is linked at N33. The AB hydrolase-1 domain occupies 81 to 376 (LQHGLIASAT…LPYNHLDFIW (296 aa)). S171 acts as the Nucleophile in catalysis. C245 and C254 are joined by a disulfide. Residue N270 is glycosylated (N-linked (GlcNAc...) asparagine). Catalysis depends on charge relay system residues D342 and H371.

It belongs to the AB hydrolase superfamily. Lipase family.

The protein localises to the secreted. The enzyme catalyses a triacylglycerol + H2O = a diacylglycerol + a fatty acid + H(+). It catalyses the reaction 1,2,3-tri-(9Z-octadecenoyl)-glycerol + H2O = 1,2-di-(9Z-octadecenoyl)-sn-glycerol + (9Z)-octadecenoate + H(+). It carries out the reaction 1,2,3-trioctanoylglycerol + H2O = 1,2-dioctanoyl-sn-glycerol + octanoate + H(+). Catalyzes the hydrolysis of triacylglycerols to yield free fatty acids, diacylglycerol, monoacylglycerol, and glycerol. Shows a preferential hydrolysis at the sn-3 position of triacylglycerol. The polypeptide is Gastric triacylglycerol lipase (Lipf) (Mus musculus (Mouse)).